Reading from the N-terminus, the 490-residue chain is Betaine aldehyde dehydrogenase (490 aa).

Residues I27 and D93 each contribute to the K(+) site. NAD(+) is bound at residue 150-152; that stretch reads GAW. K162 (charge relay system) is an active-site residue. 176–179 provides a ligand contact to NAD(+); it reads KPSE. Residue V180 participates in K(+) binding. 230-233 contacts NAD(+); sequence GTTT. A K(+)-binding site is contributed by L246. Residue E252 is the Proton acceptor of the active site. NAD(+)-binding residues include G254, C286, and E387. The Nucleophile role is filled by C286. Residue C286 is modified to Cysteine sulfenic acid (-SOH). K(+) is bound by residues K457 and G460. E464 functions as the Charge relay system in the catalytic mechanism.

It belongs to the aldehyde dehydrogenase family. In terms of assembly, dimer of dimers. It depends on K(+) as a cofactor.

The enzyme catalyses betaine aldehyde + NAD(+) + H2O = glycine betaine + NADH + 2 H(+). It participates in amine and polyamine biosynthesis; betaine biosynthesis via choline pathway; betaine from betaine aldehyde: step 1/1. In terms of biological role, involved in the biosynthesis of the osmoprotectant glycine betaine. Catalyzes the irreversible oxidation of betaine aldehyde to the corresponding acid. This Pseudomonas putida (strain GB-1) protein is Betaine aldehyde dehydrogenase.